Here is a 196-residue protein sequence, read N- to C-terminus: ATP-dependent Clp protease proteolytic subunit (196 aa).

The active-site Nucleophile is the serine 96. The active site involves histidine 121.

Belongs to the peptidase S14 family. Fourteen ClpP subunits assemble into 2 heptameric rings which stack back to back to give a disk-like structure with a central cavity, resembling the structure of eukaryotic proteasomes.

The protein resides in the cytoplasm. The catalysed reaction is Hydrolysis of proteins to small peptides in the presence of ATP and magnesium. alpha-casein is the usual test substrate. In the absence of ATP, only oligopeptides shorter than five residues are hydrolyzed (such as succinyl-Leu-Tyr-|-NHMec, and Leu-Tyr-Leu-|-Tyr-Trp, in which cleavage of the -Tyr-|-Leu- and -Tyr-|-Trp bonds also occurs).. Functionally, cleaves peptides in various proteins in a process that requires ATP hydrolysis. Has a chymotrypsin-like activity. Plays a major role in the degradation of misfolded proteins. This is ATP-dependent Clp protease proteolytic subunit from Streptococcus equi subsp. zooepidemicus (strain H70).